The following is a 223-amino-acid chain: MGMRYRALHSWDVRPDEAVEIQKMLAGSVRFQRVDRVETVAGADVSFSGSRAHAAAVLLDYHDMRLLDVSFAEMDVVYPYIPGLLTFREGPVILRALEGIDEADVLLFDGQGIAHPRRFGEASHLGLLLDRPSIGCAKSRLWGEFREPDGERGSFSLLVDRGEVVGAALRTRTNVRPVFVSPGHMSDLSSAIEIALNCARGYRVPEPLRLAHILSLKRARMTR.

Mg(2+)-binding residues include Asp-44 and Asp-109.

This sequence belongs to the endonuclease V family. Requires Mg(2+) as cofactor.

It is found in the cytoplasm. The enzyme catalyses Endonucleolytic cleavage at apurinic or apyrimidinic sites to products with a 5'-phosphate.. In terms of biological role, DNA repair enzyme involved in the repair of deaminated bases. Selectively cleaves double-stranded DNA at the second phosphodiester bond 3' to a deoxyinosine leaving behind the intact lesion on the nicked DNA. The sequence is that of Endonuclease V from Methanothrix thermoacetophila (strain DSM 6194 / JCM 14653 / NBRC 101360 / PT) (Methanosaeta thermophila).